Here is a 327-residue protein sequence, read N- to C-terminus: DNA primase large subunit PriL (327 aa).

4 residues coordinate [4Fe-4S] cluster: Cys218, Cys290, Cys299, and Cys307.

The protein belongs to the eukaryotic-type primase large subunit family. As to quaternary structure, heterodimer of a small subunit (PriS) and a large subunit (PriL). [4Fe-4S] cluster is required as a cofactor.

In terms of biological role, regulatory subunit of DNA primase, an RNA polymerase that catalyzes the synthesis of short RNA molecules used as primers for DNA polymerase during DNA replication. Stabilizes and modulates the activity of the small subunit, increasing the rate of DNA synthesis, and conferring RNA synthesis capability. The DNA polymerase activity may enable DNA primase to also catalyze primer extension after primer synthesis. May also play a role in DNA repair. This is DNA primase large subunit PriL from Thermoplasma volcanium (strain ATCC 51530 / DSM 4299 / JCM 9571 / NBRC 15438 / GSS1).